We begin with the raw amino-acid sequence, 188 residues long: Deoxycytidylate deaminase (188 aa).

A CMP/dCMP-type deaminase domain is found at 1–171 (MKASTVLQIA…DILRNAGIEV (171 aa)). Cysteine 19, cysteine 49, histidine 94, glutamate 102, and histidine 104 together coordinate Zn(2+). Glutamate 106 acts as the Proton donor in catalysis. Zn(2+) is bound by residues cysteine 132 and cysteine 135.

It belongs to the cytidine and deoxycytidylate deaminase family. In terms of assembly, homohexamer. The cofactor is Zn(2+).

The enzyme catalyses dCMP + H2O + H(+) = dUMP + NH4(+). Allosteric enzyme whose activity is greatly influenced by the end products of its metabolic pathway, dCTP and dTTP. In terms of biological role, supplies the nucleotide substrate for thymidylate synthetase. This is Deoxycytidylate deaminase (CD) from Enterobacteria phage T2 (Bacteriophage T2).